Consider the following 361-residue polypeptide: Probable pectinesterase 50 (361 aa).

Positions 1–22 (MGYISMSVVAFLVVFASPVVLA) are cleaved as a signal peptide. Glutamine 174 contacts substrate. The Proton donor role is filled by aspartate 197. Aspartate 218 functions as the Nucleophile in the catalytic mechanism. Residues arginine 275 and tryptophan 277 each coordinate substrate.

This sequence belongs to the pectinesterase family. In terms of tissue distribution, expressed in flower buds.

The protein localises to the secreted. It localises to the cell wall. It carries out the reaction [(1-&gt;4)-alpha-D-galacturonosyl methyl ester](n) + n H2O = [(1-&gt;4)-alpha-D-galacturonosyl](n) + n methanol + n H(+). It participates in glycan metabolism; pectin degradation; 2-dehydro-3-deoxy-D-gluconate from pectin: step 1/5. In terms of biological role, acts in the modification of cell walls via demethylesterification of cell wall pectin. In Arabidopsis thaliana (Mouse-ear cress), this protein is Probable pectinesterase 50 (PME50).